Here is a 190-residue protein sequence, read N- to C-terminus: Selenoprotein S (190 aa).

A helical membrane pass occupies residues 28 to 48; the sequence is SLLASYGWYILFSCVLLYIVI. The tract at residues 78–90 is VCP/p97-interacting motif (VIM); the sequence is RQEALAAARLRMQ. Positions 96–190 are disordered; that stretch reads QVEKHKEKQR…RRGPSSGGUS (95 aa). The span at 97-118 shows a compositional bias: basic and acidic residues; it reads VEKHKEKQRQLEEEKRRQKIEM. Gly residues predominate over residues 160–174; sequence RGGGYNPLTGEGGGT. Position 189 (Sec189) is a non-standard amino acid, selenocysteine.

This sequence belongs to the selenoprotein S family. As to quaternary structure, interacts with DERL1 and (via VIM motif) with VCP, suggesting that it forms a membrane complex with DERL1 that serves as a receptor for VCP. Also interacts with DERL2, DERL3 and SELENOK. The SELENOK-SELENOS complex interacts with VCP. Interacts with CCDC47. Post-translationally, truncated SELENOS proteins produced by failed UGA/Sec decoding are ubiquitinated by the CRL2(KLHDC2) and CRL2(KLHDC3) complexes, which recognizes the glycine (Gly) at the C-terminus of truncated SELENOS proteins. Truncated SELENOS proteins produced by failed UGA/Sec decoding are also ubiquitinated by the CRL5(KLHDC1) complex.

The protein resides in the endoplasmic reticulum membrane. It is found in the cytoplasm. In terms of biological role, involved in the degradation process of misfolded endoplasmic reticulum (ER) luminal proteins. Participates in the transfer of misfolded proteins from the ER to the cytosol, where they are destroyed by the proteasome in a ubiquitin-dependent manner. Probably acts by serving as a linker between DERL1, which mediates the retrotranslocation of misfolded proteins into the cytosol, and the ATPase complex VCP, which mediates the translocation and ubiquitination. The protein is Selenoprotein S of Rattus norvegicus (Rat).